Reading from the N-terminus, the 477-residue chain is UDP-N-acetylmuramate--L-alanine ligase (477 aa).

G118–S124 contacts ATP.

Belongs to the MurCDEF family.

It is found in the cytoplasm. It carries out the reaction UDP-N-acetyl-alpha-D-muramate + L-alanine + ATP = UDP-N-acetyl-alpha-D-muramoyl-L-alanine + ADP + phosphate + H(+). Its pathway is cell wall biogenesis; peptidoglycan biosynthesis. In terms of biological role, cell wall formation. The polypeptide is UDP-N-acetylmuramate--L-alanine ligase (Corynebacterium diphtheriae (strain ATCC 700971 / NCTC 13129 / Biotype gravis)).